The primary structure comprises 1041 residues: Sodium/potassium-transporting ATPase subunit alpha (1041 aa).

4 helical membrane-spanning segments follow: residues 115–135, 147–167, 312–332, and 338–358; these read FGGFAMLLWIGAILCFVAYSI, NLYLGIVLSAVVIVTGIFSYY, LITGVAVFLGVTFFVIAFILG, and AVIFLIGIIVANVPEGLLATV. D394 serves as the catalytic 4-aspartylphosphate intermediate. K526 is a binding site for ATP. 4 helical membrane-spanning segments follow: residues 808–828, 870–890, 935–955, and 970–990; these read FLAFILCDIPLPLGTVTILCI, MAYGQIGMIQAAAGFFVYFVI, TCHTAFFISIVVVQWADLIIC, and WALNFGLVFETVLAAFLSYCP.

This sequence belongs to the cation transport ATPase (P-type) (TC 3.A.3) family. Type IIC subfamily. In terms of assembly, the sodium/potassium-transporting ATPase is composed of a catalytic alpha subunit, an auxiliary non-catalytic beta subunit and an additional regulatory subunit. As to expression, high levels are found in some adult tissues: Malpighian tubules, indirect flight muscles, tubular leg muscles and throughout the nervous system (brain, optic lobes, retina and ventral thoracic neuromere). Lower levels are detected at the posterior end where the reproductive organs and rectum are located.

It localises to the cell membrane. It carries out the reaction K(+)(out) + Na(+)(in) + ATP + H2O = K(+)(in) + Na(+)(out) + ADP + phosphate + H(+). Its function is as follows. This is the catalytic component of the active enzyme, which catalyzes the hydrolysis of ATP coupled with the exchange of sodium and potassium ions across the plasma membrane. This action creates the electrochemical gradient of sodium and potassium ions, providing the energy for active transport of various nutrients. The sequence is that of Sodium/potassium-transporting ATPase subunit alpha (Atpalpha) from Drosophila melanogaster (Fruit fly).